The sequence spans 601 residues: Serine/threonine-protein phosphatase 2A 65 kDa regulatory subunit A beta isoform (601 aa).

A2 bears the N-acetylalanine mark. HEAT repeat units lie at residues 20-58 (DSLY…GVER), 59-96 (TRTE…GGPD), 97-135 (FAHC…TPVA), 136-173 (LEAH…ASNA), 174-212 (VKAE…ELDS), 213-251 (VKTE…SQED), 252-290 (LEAL…GPKI), 291-333 (ALSD…RETV), 334-372 (IMNQ…GKEN), 373-411 (TIEH…GIRQ), 412-450 (LSQS…GVEF), 451-489 (FDEK…GTEW), 490-528 (AQNT…GKEI), 529-567 (TTKQ…DTNA), and 568-601 (LQGE…LALA).

Belongs to the phosphatase 2A regulatory subunit A family. In terms of assembly, PP2A consists of a common heterodimeric core enzyme, composed of a 36 kDa catalytic subunit (subunit C) and a 65 kDa constant regulatory subunit (PR65 or subunit A), that associates with a variety of regulatory subunits. Proteins that associate with the core dimer include three families of regulatory subunits B (the R2/B/PR55/B55, R3/B''/PR72/PR130/PR59 and R5/B'/B56 families), the 48 kDa variable regulatory subunit, viral proteins, and cell signaling molecules. Interacts with IPO9. Interacts with SGO1. Interacts with RAF1.

In terms of biological role, the PR65 subunit of protein phosphatase 2A serves as a scaffolding molecule to coordinate the assembly of the catalytic subunit and a variable regulatory B subunit. The polypeptide is Serine/threonine-protein phosphatase 2A 65 kDa regulatory subunit A beta isoform (Ppp2r1b) (Mus musculus (Mouse)).